Reading from the N-terminus, the 102-residue chain is Large ribosomal subunit protein bL21 (102 aa).

The protein belongs to the bacterial ribosomal protein bL21 family. Part of the 50S ribosomal subunit. Contacts protein L20.

Functionally, this protein binds to 23S rRNA in the presence of protein L20. This Exiguobacterium sp. (strain ATCC BAA-1283 / AT1b) protein is Large ribosomal subunit protein bL21.